The sequence spans 618 residues: Dihydroxy-acid dehydratase (618 aa).

Residue Asp-81 coordinates Mg(2+). Cys-122 contributes to the [2Fe-2S] cluster binding site. Mg(2+)-binding residues include Asp-123 and Lys-124. Lys-124 is modified (N6-carboxylysine). [2Fe-2S] cluster is bound at residue Cys-195. Residue Glu-491 coordinates Mg(2+). The Proton acceptor role is filled by Ser-517.

The protein belongs to the IlvD/Edd family. As to quaternary structure, homodimer. [2Fe-2S] cluster serves as cofactor. The cofactor is Mg(2+).

The catalysed reaction is (2R)-2,3-dihydroxy-3-methylbutanoate = 3-methyl-2-oxobutanoate + H2O. The enzyme catalyses (2R,3R)-2,3-dihydroxy-3-methylpentanoate = (S)-3-methyl-2-oxopentanoate + H2O. It participates in amino-acid biosynthesis; L-isoleucine biosynthesis; L-isoleucine from 2-oxobutanoate: step 3/4. Its pathway is amino-acid biosynthesis; L-valine biosynthesis; L-valine from pyruvate: step 3/4. Functionally, functions in the biosynthesis of branched-chain amino acids. Catalyzes the dehydration of (2R,3R)-2,3-dihydroxy-3-methylpentanoate (2,3-dihydroxy-3-methylvalerate) into 2-oxo-3-methylpentanoate (2-oxo-3-methylvalerate) and of (2R)-2,3-dihydroxy-3-methylbutanoate (2,3-dihydroxyisovalerate) into 2-oxo-3-methylbutanoate (2-oxoisovalerate), the penultimate precursor to L-isoleucine and L-valine, respectively. The polypeptide is Dihydroxy-acid dehydratase (Dechloromonas aromatica (strain RCB)).